A 528-amino-acid polypeptide reads, in one-letter code: GTPase Obg (528 aa).

An Obg domain is found at 2–159 (ASFVDRVVLH…SDIVLELKSI (158 aa)). An OBG-type G domain is found at 160 to 343 (ADIALVGFPS…LGFAMAEIVQ (184 aa)). Residues 166-173 (GFPSAGKS), 191-195 (FTTLI), 212-215 (DVPG), 295-298 (NKVD), and 324-326 (SAT) contribute to the GTP site. The Mg(2+) site is built by Ser173 and Thr193. Residues 363 to 447 (PRAVNESGFK…DDGVVFDWEP (85 aa)) form the OCT domain. The tract at residues 471–490 (DRPTRSQKRDEQIERREAKA) is disordered.

It belongs to the TRAFAC class OBG-HflX-like GTPase superfamily. OBG GTPase family. As to quaternary structure, monomer. It depends on Mg(2+) as a cofactor.

The protein resides in the cytoplasm. Its function is as follows. An essential GTPase which binds GTP, GDP and possibly (p)ppGpp with moderate affinity, with high nucleotide exchange rates and a fairly low GTP hydrolysis rate. Plays a role in control of the cell cycle, stress response, ribosome biogenesis and in those bacteria that undergo differentiation, in morphogenesis control. The polypeptide is GTPase Obg (Paenarthrobacter aurescens (strain TC1)).